The chain runs to 280 residues: uncharacterized protein (280 aa).

An N-terminal signal peptide occupies residues 1–26 (MNILIKSAVKNFIVFSTALYTSFSFA).

It to E.coli YibQ.

This is an uncharacterized protein from Haemophilus influenzae (strain ATCC 51907 / DSM 11121 / KW20 / Rd).